A 707-amino-acid chain; its full sequence is ATP-dependent zinc metalloprotease FtsH (707 aa).

Residues 1 to 25 are Cytoplasmic-facing; that stretch reads MSELDNKKDKSKDSNKKPKKPGAFS. The chain crosses the membrane as a helical span at residues 26-46; it reads IGNIIIFVIVALLLIWVVFAF. The Extracellular portion of the chain corresponds to 47-128; sequence LPNNPGTNKS…GTTFTGLELA (82 aa). A helical membrane pass occupies residues 129-149; sequence TLAIANTSASGIGTLNFSGLV. The Cytoplasmic segment spans residues 150-707; the sequence is TPTNQALAIL…IKTDESLDIK (558 aa). Position 246-253 (246-253) interacts with ATP; it reads GPPGTGKT. Residue His468 coordinates Zn(2+). The active site involves Glu469. His472 and Asp546 together coordinate Zn(2+).

In the central section; belongs to the AAA ATPase family. It in the C-terminal section; belongs to the peptidase M41 family. In terms of assembly, homohexamer. Zn(2+) serves as cofactor.

Its subcellular location is the cell membrane. Functionally, acts as a processive, ATP-dependent zinc metallopeptidase for both cytoplasmic and membrane proteins. Plays a role in the quality control of integral membrane proteins. In Mycoplasma mobile (strain ATCC 43663 / 163K / NCTC 11711) (Mesomycoplasma mobile), this protein is ATP-dependent zinc metalloprotease FtsH.